Reading from the N-terminus, the 122-residue chain is Large ribosomal subunit protein uL14 (122 aa).

The protein belongs to the universal ribosomal protein uL14 family. As to quaternary structure, part of the 50S ribosomal subunit. Forms a cluster with proteins L3 and L19. In the 70S ribosome, L14 and L19 interact and together make contacts with the 16S rRNA in bridges B5 and B8.

In terms of biological role, binds to 23S rRNA. Forms part of two intersubunit bridges in the 70S ribosome. The sequence is that of Large ribosomal subunit protein uL14 from Sorangium cellulosum (strain So ce56) (Polyangium cellulosum (strain So ce56)).